The chain runs to 162 residues: MKPIRFFKPENLQLAKAILARYPLRFQSAALVPLLDLAQRQHGTWIPPTAMYEIASLAGVSIDYVHSLILAYPNDFFWRPKKPRVRICNSWMCQQAAEEQGNSNWDSQCRSVATKYGFDVENTGCLGNCFQGPAMWINDKIYGVNTKEKLVDIMEALTQKKN.

Residues C88, C93, C125, and C129 each coordinate [2Fe-2S] cluster.

Belongs to the complex I 24 kDa subunit family. It depends on [2Fe-2S] cluster as a cofactor.

The protein resides in the mitochondrion. The sequence is that of NADH-ubiquinone oxidoreductase 24 kDa subunit homolog C11E3.12, mitochondrial from Schizosaccharomyces pombe (strain 972 / ATCC 24843) (Fission yeast).